The following is a 494-amino-acid chain: Glutamyl-tRNA(Gln) amidotransferase subunit A (494 aa).

Residues Lys80 and Ser155 each act as charge relay system in the active site. The active-site Acyl-ester intermediate is the Ser179.

It belongs to the amidase family. GatA subfamily. Heterotrimer of A, B and C subunits.

It catalyses the reaction L-glutamyl-tRNA(Gln) + L-glutamine + ATP + H2O = L-glutaminyl-tRNA(Gln) + L-glutamate + ADP + phosphate + H(+). Allows the formation of correctly charged Gln-tRNA(Gln) through the transamidation of misacylated Glu-tRNA(Gln) in organisms which lack glutaminyl-tRNA synthetase. The reaction takes place in the presence of glutamine and ATP through an activated gamma-phospho-Glu-tRNA(Gln). The sequence is that of Glutamyl-tRNA(Gln) amidotransferase subunit A from Lachnoclostridium phytofermentans (strain ATCC 700394 / DSM 18823 / ISDg) (Clostridium phytofermentans).